Here is a 414-residue protein sequence, read N- to C-terminus: MTQANLSETLFKPRFKHPETSTLVRRFNHGAQPPVQSALDGKTIPHWYRMINRLMWIWRGIDPREILDVQARIVMSDAERTDDDLYDTVIGYRGGNWIYEWATQAMVWQQKACAEEDPQLSGRHWLHAATLYNIAAYPHLKGDDLAEQAQALSNRAYEEAAQRLPGTMRQMEFTVPGGAPITGFLHMPKGDGPFPTVLMCGGLDAMQTDYYSLYERYFAPRGIAMLTIDMPSVGFSSKWKLTQDSCLLHQRVLKALPNVPWVDHTRVAAFGFRFGANVAVRLAYLESPRLKAVACLGPVVHTLLSDFKCQQQVPEMYLDVLASRLGMHDASDEALRVELNRYSLKVQGLLGRRCPTPMLSGYWKNDPFSPEEDSRLITSSSADGKLLEIPFNPVYRNFDKGLQEITDWIEKRLC.

It belongs to the FrsA family.

The enzyme catalyses a carboxylic ester + H2O = an alcohol + a carboxylate + H(+). Its function is as follows. Catalyzes the hydrolysis of esters. In Escherichia coli O157:H7, this protein is Esterase FrsA.